The following is a 132-amino-acid chain: Small ribosomal subunit protein uS8 (132 aa).

It belongs to the universal ribosomal protein uS8 family. In terms of assembly, part of the 30S ribosomal subunit. Contacts proteins S5 and S12.

Its function is as follows. One of the primary rRNA binding proteins, it binds directly to 16S rRNA central domain where it helps coordinate assembly of the platform of the 30S subunit. The sequence is that of Small ribosomal subunit protein uS8 from Xanthobacter autotrophicus (strain ATCC BAA-1158 / Py2).